The sequence spans 346 residues: UDP-N-acetylenolpyruvoylglucosamine reductase (346 aa).

The FAD-binding PCMH-type domain occupies 23–194 (FDVRAQFACR…TSVTFRLPKV (172 aa)). Arginine 170 is an active-site residue. Serine 246 acts as the Proton donor in catalysis. Residue glutamate 342 is part of the active site.

It belongs to the MurB family. The cofactor is FAD.

Its subcellular location is the cytoplasm. It catalyses the reaction UDP-N-acetyl-alpha-D-muramate + NADP(+) = UDP-N-acetyl-3-O-(1-carboxyvinyl)-alpha-D-glucosamine + NADPH + H(+). It functions in the pathway cell wall biogenesis; peptidoglycan biosynthesis. Functionally, cell wall formation. In Paraburkholderia phytofirmans (strain DSM 17436 / LMG 22146 / PsJN) (Burkholderia phytofirmans), this protein is UDP-N-acetylenolpyruvoylglucosamine reductase.